Consider the following 203-residue polypeptide: ADP-ribosylation factor-like protein 6-interacting protein 1 (203 aa).

Residues 1 to 41 are Cytoplasmic-facing; sequence MAEGDNRSTNLLAAETASLEEQLQGWGEVMLMADKVLRWER. The chain crosses the membrane as a helical span at residues 42–62; it reads AWFPPAIMGVVSLVFLIIYYL. Over 63–65 the chain is Lumenal; the sequence is DPS. Residues 66-86 form a helical membrane-spanning segment; the sequence is VLSGVSCFVMFLCLADYLVPI. At 87-133 the chain is on the cytoplasmic side; that stretch reads LAPRIFGSNKWTTEQQQRFHEICSNLVKTRRRAVGWWKRLFTLKEEK. Residues 134 to 175 traverse the membrane as a helical segment; it reads PKMYFMTMIVSLAAVAWVGQQVHNLLLTYLIVTSLLLLPGLN. The Lumenal portion of the chain corresponds to 176 to 203; it reads QHGIILKYIGMAKREINKLLKQKEKKNE.

Belongs to the ARL6ip family. Homooligomer. Heterodimer with ARL6IP5. Interacts with ARL6. Interacts with TMEM33. Interacts with ATL1. Expressed in all hematopoietic cell lineages, but the highest level of expression is found in early myeloid progenitor cells. Expressed in brain, bone marrow, thymus and lung. Expressed at low level in liver, kidney and spleen. Not detected in heart.

The protein resides in the endomembrane system. Its subcellular location is the endoplasmic reticulum membrane. It localises to the endoplasmic reticulum. Positively regulates SLC1A1/EAAC1-mediated glutamate transport by increasing its affinity for glutamate in a PKC activity-dependent manner. Promotes the catalytic efficiency of SLC1A1/EAAC1 probably by reducing its interaction with ARL6IP5, a negative regulator of SLC1A1/EAAC1-mediated glutamate transport. Plays a role in the formation and stabilization of endoplasmic reticulum tubules. Negatively regulates apoptosis, possibly by modulating the activity of caspase-9 (CASP9). Inhibits cleavage of CASP9-dependent substrates and downstream markers of apoptosis but not CASP9 itself. May be involved in protein transport, membrane trafficking, or cell signaling during hematopoietic maturation. This Homo sapiens (Human) protein is ADP-ribosylation factor-like protein 6-interacting protein 1 (ARL6IP1).